A 531-amino-acid chain; its full sequence is Peptide chain release factor 3 (531 aa).

A tr-type G domain is found at 10 to 278; sequence RRRRTFAIIS…SLIDWAPAPK (269 aa). Residues 19–26, 87–91, and 141–144 contribute to the GTP site; these read SHPDAGKT, DTPGH, and NKYD.

This sequence belongs to the TRAFAC class translation factor GTPase superfamily. Classic translation factor GTPase family. PrfC subfamily.

It localises to the cytoplasm. Functionally, increases the formation of ribosomal termination complexes and stimulates activities of RF-1 and RF-2. It binds guanine nucleotides and has strong preference for UGA stop codons. It may interact directly with the ribosome. The stimulation of RF-1 and RF-2 is significantly reduced by GTP and GDP, but not by GMP. The sequence is that of Peptide chain release factor 3 from Neisseria meningitidis serogroup C / serotype 2a (strain ATCC 700532 / DSM 15464 / FAM18).